A 343-amino-acid chain; its full sequence is Heat-inducible transcription repressor HrcA (343 aa).

Belongs to the HrcA family.

Functionally, negative regulator of class I heat shock genes (grpE-dnaK-dnaJ and groELS operons). Prevents heat-shock induction of these operons. This chain is Heat-inducible transcription repressor HrcA, found in Bacillus velezensis (strain DSM 23117 / BGSC 10A6 / LMG 26770 / FZB42) (Bacillus amyloliquefaciens subsp. plantarum).